The chain runs to 143 residues: Cofilin (143 aa).

Positions 5–137 (GVAVADESLN…AYESVLEKVS (133 aa)) constitute an ADF-H domain.

The protein belongs to the actin-binding proteins ADF family.

Its subcellular location is the cytoplasm. The protein localises to the cytoskeleton. It is found in the nucleus matrix. In terms of biological role, controls reversibly actin polymerization and depolymerization in a pH-sensitive manner. It has the ability to bind G- and F-actin in a 1:1 ratio of cofilin to actin. Binding to F-actin is regulated by tropomyosin. It is the major component of intranuclear and cytoplasmic actin rods. Required for accumulation of actin at the cell division site via depolymerizing actin at the cell ends. In association with myosin II has a role in the assembly of the contractile ring via severing actin filaments. Involved in the maintenance of the contractile ring once formed. In association with profilin and capping protein, has a role in the mitotic reorganization of the actin cytoskeleton. This chain is Cofilin (COF1), found in Kluyveromyces lactis (strain ATCC 8585 / CBS 2359 / DSM 70799 / NBRC 1267 / NRRL Y-1140 / WM37) (Yeast).